A 167-amino-acid polypeptide reads, in one-letter code: Zinc finger CCCH domain-containing protein 3 (167 aa).

Residues 63–91 (AAAIGVCQHFVRTGTCKFGDSCRYFHPKP) form a C3H1-type zinc finger. Positions 89–101 (PKPPPANPGPAPS) are enriched in pro residues. Positions 89 to 167 (PKPPPANPGP…YPPFPFVDWG (79 aa)) are disordered. The span at 108–120 (MAQQSNIQGSQPN) shows a compositional bias: polar residues. Positions 149 to 167 (SLRPPPEGGYPPFPFVDWG) are enriched in pro residues.

This Oryza sativa subsp. japonica (Rice) protein is Zinc finger CCCH domain-containing protein 3.